The primary structure comprises 200 residues: Bombinin-like peptides 3 (200 aa).

The or 18 signal peptide spans 1 to 16 (MNFKYIVAVSILIASA). Phenylalanine 68 and phenylalanine 129 each carry phenylalanine amide.

It belongs to the bombinin family. As to expression, expressed by the skin glands.

The protein localises to the secreted. In terms of biological role, has antimicrobial activity, but no hemolytic activity. Preference on killing Gram-negative non-enteric bacteria. The protein is Bombinin-like peptides 3 of Bombina orientalis (Oriental fire-bellied toad).